Here is a 219-residue protein sequence, read N- to C-terminus: Leukocyte surface antigen CD53 (219 aa).

Over Met1–Phe11 the chain is Cytoplasmic. A helical membrane pass occupies residues Val12–Ile32. Residues Tyr33–Asn54 are Extracellular-facing. Residues Val55–Leu69 traverse the membrane as a helical segment. At Gly70–Cys80 the chain is on the cytoplasmic side. Residues Leu81 to Tyr106 traverse the membrane as a helical segment. The Extracellular segment spans residues Glu107–Asn181. Residues Asn129 and Asn148 are each glycosylated (N-linked (GlcNAc...) asparagine). Residues Phe182–Leu206 traverse the membrane as a helical segment. Residues Asn207–Leu219 are Cytoplasmic-facing.

It belongs to the tetraspanin (TM4SF) family. In terms of assembly, interacts with SCIMP. Interacts with CD45/PTPRC. Interacts with IL7R. Interacts with RBL2 and PPP2CA.

It localises to the cell membrane. The protein localises to the cell junction. The protein resides in the membrane. It is found in the synapse. Its function is as follows. Structural component of specialized membrane microdomains known as tetraspanin-enriched microdomains (TERMs), which act as platforms for receptor clustering and signaling. Participates thereby in diverse biological functions such as cell signal transduction, adhesion, migration and protein trafficking. Plays a role in the activation of monocytes and B-cells. Acts as an essential regulator of B-cell development by promoting interleukin-7 receptor/IL7R signaling. Also promotes, in B-cells, the BCR signaling by recruiting PKC to the plasma membrane in order to phosphorylate its substrates. Plays an essential role in B- and T-cells homing to lymph nodes by stabilizing L-selectin/SELL cell surface expression. Also mediates metabolic and inflammatory functions in hepatocytes and adipose tissue by promoting TNF-alpha and LPS signaling independent of the immune compartment. This chain is Leukocyte surface antigen CD53 (CD53), found in Bos taurus (Bovine).